The primary structure comprises 1151 residues: PPi-type phosphoenolpyruvate carboxykinase 1 (1151 aa).

A coiled-coil region spans residues 1083–1129 (RQKLEVAKLNKDLAYLNKTIAEKPRLAETLNKQIAAVKEELQYVSSE).

The protein belongs to the PPi-type phosphoenolpyruvate carboxykinase family. As to quaternary structure, monomer and trimer; forms heterotrimers with PEPCK2 and PEPCK3.

It localises to the cytoplasm. The protein resides in the cytosol. The enzyme catalyses oxaloacetate + diphosphate = phosphoenolpyruvate + phosphate + CO2. In terms of biological role, inorganic pyrophosphate (PPi)-dependent phosphoenolpyruvate carboxykinase, which regulates the carbon flow of the central metabolism by fixing CO(2) to phosphoenolpyruvate to produce oxaloacetate. Can also produce pyruvate and diphosphate from phosphoenolpyruvate and phosphate. This chain is PPi-type phosphoenolpyruvate carboxykinase 1, found in Entamoeba histolytica (strain ATCC 30459 / HM-1:IMSS / ABRM).